The sequence spans 608 residues: Protein trichome birefringence (608 aa).

A helical; Signal-anchor for type II membrane protein membrane pass occupies residues 38–58; that stretch reads TFAYAFVITFVSFTLFFAFSP. Composition is skewed to polar residues over residues 101-137 and 145-203; these read STKP…QTPA and AKNT…TSPA. The segment at 101–236 is disordered; the sequence is STKPTNRSSD…TPKKQTKTVD (136 aa). Residues 215–227 show a composition bias toward low complexity; that stretch reads TNSSSNSSTASST. The GDS motif motif lies at 328–330; the sequence is GDS. The DCXHWCLPGXXDXWN motif signature appears at 573-587; the sequence is DCSHWCLPGVPDSWN.

Belongs to the PC-esterase family. TBL subfamily. In terms of tissue distribution, expressed in leaf vasculature, growing part of the root, expanding inflorescence stems and trichomes.

The protein localises to the membrane. Required during cellulose deposition. May act as a bridging protein that binds pectin and other cell wall polysaccharides. Probably involved in maintaining esterification of pectins. May be involved in the specific O-acetylation of cell wall polymers. This Arabidopsis thaliana (Mouse-ear cress) protein is Protein trichome birefringence (TBR).